The following is a 93-amino-acid chain: Cell division topological specificity factor (93 aa).

The protein belongs to the MinE family.

In terms of biological role, prevents the cell division inhibition by proteins MinC and MinD at internal division sites while permitting inhibition at polar sites. This ensures cell division at the proper site by restricting the formation of a division septum at the midpoint of the long axis of the cell. The chain is Cell division topological specificity factor from Methylococcus capsulatus (strain ATCC 33009 / NCIMB 11132 / Bath).